Reading from the N-terminus, the 476-residue chain is Glycogen synthase (476 aa).

Residue Lys-15 coordinates ADP-alpha-D-glucose.

This sequence belongs to the glycosyltransferase 1 family. Bacterial/plant glycogen synthase subfamily.

The catalysed reaction is [(1-&gt;4)-alpha-D-glucosyl](n) + ADP-alpha-D-glucose = [(1-&gt;4)-alpha-D-glucosyl](n+1) + ADP + H(+). Its pathway is glycan biosynthesis; glycogen biosynthesis. In terms of biological role, synthesizes alpha-1,4-glucan chains using ADP-glucose. This chain is Glycogen synthase, found in Streptococcus mutans serotype c (strain ATCC 700610 / UA159).